The primary structure comprises 185 residues: Ribosome-recycling factor (185 aa).

The tract at residues E143–E163 is disordered.

Belongs to the RRF family.

It localises to the cytoplasm. In terms of biological role, responsible for the release of ribosomes from messenger RNA at the termination of protein biosynthesis. May increase the efficiency of translation by recycling ribosomes from one round of translation to another. This Syntrophomonas wolfei subsp. wolfei (strain DSM 2245B / Goettingen) protein is Ribosome-recycling factor.